Consider the following 224-residue polypeptide: 2-C-methyl-D-erythritol 4-phosphate cytidylyltransferase (224 aa).

It belongs to the IspD/TarI cytidylyltransferase family. IspD subfamily.

It carries out the reaction 2-C-methyl-D-erythritol 4-phosphate + CTP + H(+) = 4-CDP-2-C-methyl-D-erythritol + diphosphate. It participates in isoprenoid biosynthesis; isopentenyl diphosphate biosynthesis via DXP pathway; isopentenyl diphosphate from 1-deoxy-D-xylulose 5-phosphate: step 2/6. Its function is as follows. Catalyzes the formation of 4-diphosphocytidyl-2-C-methyl-D-erythritol from CTP and 2-C-methyl-D-erythritol 4-phosphate (MEP). The polypeptide is 2-C-methyl-D-erythritol 4-phosphate cytidylyltransferase (Caldicellulosiruptor bescii (strain ATCC BAA-1888 / DSM 6725 / KCTC 15123 / Z-1320) (Anaerocellum thermophilum)).